Here is a 110-residue protein sequence, read N- to C-terminus: Small ribosomal subunit protein uS10 (110 aa).

Belongs to the universal ribosomal protein uS10 family. In terms of assembly, part of the 30S ribosomal subunit.

Its function is as follows. Involved in the binding of tRNA to the ribosomes. This Ehrlichia ruminantium (strain Gardel) protein is Small ribosomal subunit protein uS10.